Consider the following 516-residue polypeptide: Adenine DNA glycosylase (516 aa).

Residues Met-1 to Lys-23 show a composition bias toward basic residues. Positions Met-1 to Gly-38 are disordered. The active-site Proton donor/acceptor is Glu-105. Residues Cys-261, Cys-268, Cys-271, and Cys-277 each coordinate [4Fe-4S] cluster. Residues Pro-335–Glu-467 form the Nudix hydrolase domain. The Nudix box motif lies at Val-376 to Ala-398. Positions Cys-474–Gln-516 are disordered.

This sequence belongs to the Nth/MutY family. [4Fe-4S] cluster is required as a cofactor. In terms of tissue distribution, expressed in brain, spleen, heart, liver and kidney.

It is found in the nucleus. The protein localises to the mitochondrion. The enzyme catalyses Hydrolyzes free adenine bases from 7,8-dihydro-8-oxoguanine:adenine mismatched double-stranded DNA, leaving an apurinic site.. Involved in oxidative DNA damage repair. Initiates repair of A*oxoG to C*G by removing the inappropriately paired adenine base from the DNA backbone. Possesses both adenine and 2-OH-A DNA glycosylase activities. In Rattus norvegicus (Rat), this protein is Adenine DNA glycosylase (Mutyh).